The primary structure comprises 142 residues: Midkine (142 aa).

The first 21 residues, 1-21 (MELRAFCVILLITFLAVSSQA), serve as a signal peptide directing secretion. Intrachain disulfides connect cysteine 36-cysteine 60, cysteine 44-cysteine 69, cysteine 51-cysteine 73, cysteine 83-cysteine 115, and cysteine 93-cysteine 125.

This sequence belongs to the pleiotrophin family.

It localises to the secreted. In terms of biological role, secreted protein that functions as a cytokine and growth factor and mediates its signal through cell-surface proteoglycan and non-proteoglycan receptors. Binds cell-surface proteoglycan receptors via their chondroitin sulfate (CS) groups. Thereby regulates many processes like inflammatory response, cell proliferation, cell adhesion, cell growth, cell survival, tissue regeneration, cell differentiation and cell migration. Inhibits mesoderm formation and promotes neural formation during development. Plays a role in development of the neuromuscular junction (NMJ). Has antibacterial activity against both Gram-positive and Gram-negative bacteria. In Xenopus tropicalis (Western clawed frog), this protein is Midkine.